Consider the following 827-residue polypeptide: Villin-1 (827 aa).

The necessary for homodimerization stretch occupies residues 1–126 (MTKLSAQVKG…IRKGGVASGM (126 aa)). Residues 1 to 734 (MTKLSAQVKG…YEDLKAELGN (734 aa)) are core. The stretch at 27–76 (MQMVPVPSNSFGSFFDGDCYVIQAIHKTGSNLSYDIHYWIGQASSQDEQG) is one Gelsolin-like 1 repeat. 2 LPA/PIP2-binding site regions span residues 112–119 (KKGIVIRK) and 138–146 (RLLHVKGKR). Gelsolin-like repeat units lie at residues 148 to 188 (VVAG…MERL) and 265 to 309 (VVVR…QEKK). A Phosphoserine modification is found at S366. Gelsolin-like repeat units follow at residues 407–457 (NLEL…DEIT), 528–568 (TKAF…DERE), and 631–672 (FLAT…DEKK). Phosphoserine is present on S735. Residues 735–827 (SGDWSQITAE…QNLKKEKGLF (93 aa)) form a headpiece region. Positions 761-827 (SGPLPIFPLE…QNLKKEKGLF (67 aa)) constitute an HP domain. Residues 816–824 (KQQNLKKEK) form an LPA/PIP2-binding site 3 region.

It belongs to the villin/gelsolin family. Monomer. Homodimer; homodimerization is necessary for actin-bundling. Associates with F-actin; phosphorylation at tyrosine residues decreases the association with F-actin. Interacts (phosphorylated at C-terminus tyrosine phosphorylation sites) with PLCG1 (via the SH2 domains). Interacts (phosphorylated form) with PLCG1; the interaction is enhanced by hepatocyte growth factor (HGF). Phosphorylated on tyrosine residues by SRC. The unphosphorylated form increases the initial rate of actin-nucleating activity, whereas the tyrosine-phosphorylated form inhibits actin-nucleating activity, enhances actin-bundling activity and enhances actin-severing activity by reducing high Ca(2+) requirements. The tyrosine-phosphorylated form does not regulate actin-capping activity. Tyrosine phosphorylation is essential for cell migration: tyrosine phosphorylation sites in the N-terminus half regulate actin reorganization and cell morphology, whereas tyrosine phosphorylation sites in the C-terminus half regulate cell migration via interaction with PLCG1. Tyrosine phosphorylation is induced by epidermal growth factor (EGF) and stimulates cell migration.

The protein resides in the cytoplasm. It localises to the cytoskeleton. Its subcellular location is the cell projection. It is found in the lamellipodium. The protein localises to the ruffle. The protein resides in the microvillus. It localises to the filopodium tip. Its subcellular location is the filopodium. In terms of biological role, epithelial cell-specific Ca(2+)-regulated actin-modifying protein that modulates the reorganization of microvillar actin filaments. Plays a role in the actin nucleation, actin filament bundle assembly, actin filament capping and severing. Binds phosphatidylinositol 4,5-bisphosphate (PIP2) and lysophosphatidic acid (LPA); binds LPA with higher affinity than PIP2. Binding to LPA increases its phosphorylation by SRC and inhibits all actin-modifying activities. Binding to PIP2 inhibits actin-capping and -severing activities but enhances actin-bundling activity. Regulates the intestinal epithelial cell morphology, cell invasion, cell migration and apoptosis. Protects against apoptosis induced by dextran sodium sulfate (DSS) in the gastrointestinal epithelium. Appears to regulate cell death by maintaining mitochondrial integrity. Enhances hepatocyte growth factor (HGF)-induced epithelial cell motility, chemotaxis and wound repair. The chain is Villin-1 (VIL1) from Bos taurus (Bovine).